A 138-amino-acid polypeptide reads, in one-letter code: Phospholipase A2 homolog 1 (138 aa).

The signal sequence occupies residues 1 to 16 (MRTLWIMAVLLVGVEG). 7 disulfide bridges follow: Cys42/Cys132, Cys44/Cys60, Cys59/Cys111, Cys65/Cys138, Cys66/Cys104, Cys73/Cys97, and Cys91/Cys102. An important for membrane-damaging activities in eukaryotes and bacteria; heparin-binding region spans residues 121–134 (KKYKNNYLKPFCKK).

The protein belongs to the phospholipase A2 family. Group II subfamily. K49 sub-subfamily. As to quaternary structure, homodimer; non-covalently linked (probable alternative/compact dimer conformation in solution). Expressed by the venom gland.

Its subcellular location is the secreted. Its function is as follows. Snake venom phospholipase A2 homolog that lacks enzymatic and anticoagulant activities. In mice, it induces conspicuous local myonecrosis, edema, and a systemic interleukin-6 response. In vitro, it is cytolytic upon myoblasts, and weakly bactericidal. A model of myotoxic mechanism has been proposed: an apo Lys49-PLA2 is activated by the entrance of a hydrophobic molecule (e.g. fatty acid) at the hydrophobic channel of the protein leading to a reorientation of a monomer. This reorientation causes a transition between 'inactive' to 'active' states, causing alignment of C-terminal and membrane-docking sites (MDoS) side-by-side and putting the membrane-disruption sites (MDiS) in the same plane, exposed to solvent and in a symmetric position for both monomers. The MDoS region stabilizes the toxin on membrane by the interaction of charged residues with phospholipid head groups. Subsequently, the MDiS region destabilizes the membrane with penetration of hydrophobic residues. This insertion causes a disorganization of the membrane, allowing an uncontrolled influx of ions (i.e. calcium and sodium), and eventually triggering irreversible intracellular alterations and cell death. The chain is Phospholipase A2 homolog 1 from Bothrops atrox (Barba amarilla).